The sequence spans 528 residues: MNRLKKSHRQKSLFWRPIAPNPRWQKENPTAHGSTDTGGFGYNGGNEEVKTSSTMMNGIHALVNERQNEWLRGYEVDIKSRFDNIESVLKDILAQQSQLNFVSWANQQLFAKLGVSLTEQDWQSGVQLQSQKGFQFLYGKTLFAQFMRMSEDFFVNDPLSGQRKQEAERMFKEAGFHAVGIAPCADGRLAHILSYVLRLPYALARRKAHAGVMFDVSESVRNWVFIEHTRFRDGQPNLADEPTRYLKIAVYHFSKADPTHQGCAAHGSDDHKAAQAALQKLKDFKQAIENRFGCGSTVQTLLLGLNTDDDSMKVHIPNASGEVCLDRYVETEQLYQATMNLPDSEAKQALENAIVTCNQALGSTAPQPELVKLLSWLIGNNFSQIAYVNQYENGCYSDIGHAERFIGIGNGFEEVQLRNLSYYSFLDTVEEGVNDVDVGIKIFKGLNVKKGLPIPIIIRCDYDGRVPGSKDRAEAKALRIEKALHNRYQELSAPGLLQTLPTLRDFTSCKPAERLPGLADLSAKQRTA.

A disordered region spans residues 17-47; that stretch reads PIAPNPRWQKENPTAHGSTDTGGFGYNGGNE. Residue Cys184 coordinates Zn(2+). Asp186 serves as the catalytic Proton acceptor. Residues His252 and Cys263 each contribute to the Zn(2+) site.

The protein belongs to the beta-class carbonic anhydrase family. CsoSCA subfamily. In terms of assembly, homodimer. Requires Zn(2+) as cofactor.

The protein localises to the carboxysome. It carries out the reaction hydrogencarbonate + H(+) = CO2 + H2O. Its activity is regulated as follows. Inhibited by ethoxyzolamide and dithiothreitol (in crude extracts upon expression in E.coli). Functionally, reversible hydration of carbon dioxide. This bacteria encodes at least 3 CA enzymes. Essential for chemolithotrophic carbon dioxide fixation, supplies CO(2) to RuBisCO (ribulose bisphosphate carboxylase, cbbL-cbbS) in the carboxysome. The sequence is that of Carboxysome shell carbonic anhydrase from Hydrogenovibrio crunogenus (strain DSM 25203 / XCL-2) (Thiomicrospira crunogena).